We begin with the raw amino-acid sequence, 352 residues long: Probable dual-specificity RNA methyltransferase RlmN (352 aa).

Glutamate 93 serves as the catalytic Proton acceptor. Residues 99–332 (TAKRLTVCVS…ATVRQTRGLD (234 aa)) form the Radical SAM core domain. The cysteines at positions 106 and 337 are disulfide-linked. The [4Fe-4S] cluster site is built by cysteine 113, cysteine 117, and cysteine 120. Residues 160-161 (GE), serine 190, 213-215 (SLH), and asparagine 294 each bind S-adenosyl-L-methionine. Catalysis depends on cysteine 337, which acts as the S-methylcysteine intermediate.

This sequence belongs to the radical SAM superfamily. RlmN family. Requires [4Fe-4S] cluster as cofactor.

Its subcellular location is the cytoplasm. The enzyme catalyses adenosine(2503) in 23S rRNA + 2 reduced [2Fe-2S]-[ferredoxin] + 2 S-adenosyl-L-methionine = 2-methyladenosine(2503) in 23S rRNA + 5'-deoxyadenosine + L-methionine + 2 oxidized [2Fe-2S]-[ferredoxin] + S-adenosyl-L-homocysteine. It catalyses the reaction adenosine(37) in tRNA + 2 reduced [2Fe-2S]-[ferredoxin] + 2 S-adenosyl-L-methionine = 2-methyladenosine(37) in tRNA + 5'-deoxyadenosine + L-methionine + 2 oxidized [2Fe-2S]-[ferredoxin] + S-adenosyl-L-homocysteine. In terms of biological role, specifically methylates position 2 of adenine 2503 in 23S rRNA and position 2 of adenine 37 in tRNAs. This Synechococcus sp. (strain JA-2-3B'a(2-13)) (Cyanobacteria bacterium Yellowstone B-Prime) protein is Probable dual-specificity RNA methyltransferase RlmN.